A 166-amino-acid polypeptide reads, in one-letter code: MASVNKVILVGNLGRDPEVRYSPDGAAICNVSIATTSQWKDKASGERREETEWHRVVMYNRLAEIAGEYLKKGRSVYIEGRLKTRKWQDKDTGADRYSTEIVADQMQMLGGRDSGGDSGGGYGGGYDDAPRQQRAPAQRPAAAPQRPAPQAAPAANLADMDDDIPF.

The region spanning 4–110 (VNKVILVGNL…IVADQMQMLG (107 aa)) is the SSB domain. Residues 108-166 (MLGGRDSGGDSGGGYGGGYDDAPRQQRAPAQRPAAAPQRPAPQAAPAANLADMDDDIPF) form a disordered region. Over residues 112-126 (RDSGGDSGGGYGGGY) the composition is skewed to gly residues. Residues 132–155 (QQRAPAQRPAAAPQRPAPQAAPAA) are compositionally biased toward low complexity. Residues 161 to 166 (DDDIPF) carry the Important for interaction with partner proteins motif.

As to quaternary structure, homotetramer.

Plays an important role in DNA replication, recombination and repair. Binds to ssDNA and to an array of partner proteins to recruit them to their sites of action during DNA metabolism. In Bordetella bronchiseptica (strain ATCC BAA-588 / NCTC 13252 / RB50) (Alcaligenes bronchisepticus), this protein is Single-stranded DNA-binding protein (ssb).